The primary structure comprises 206 residues: Ribosomal RNA small subunit methyltransferase G (206 aa).

S-adenosyl-L-methionine contacts are provided by residues G74, L79, 125 to 126 (VE), and R140.

Belongs to the methyltransferase superfamily. RNA methyltransferase RsmG family.

The protein localises to the cytoplasm. It carries out the reaction guanosine(527) in 16S rRNA + S-adenosyl-L-methionine = N(7)-methylguanosine(527) in 16S rRNA + S-adenosyl-L-homocysteine. Functionally, specifically methylates the N7 position of guanine in position 527 of 16S rRNA. This chain is Ribosomal RNA small subunit methyltransferase G, found in Shewanella sp. (strain MR-7).